The chain runs to 305 residues: Divergent heme oxygenase-like protein (305 aa).

The N-terminal stretch at 1 to 18 is a signal peptide; the sequence is MIRKIIILMFTFFSNIHN. Positions 1–83 are sufficient for apicoplast targeting; it reads MIRKIIILMF…GVDKNNINYN (83 aa). 3 N-linked (GlcNAc...) asparagine glycosylation sites follow: Asn-132, Asn-159, and Asn-288.

Proteolytically cleaved; targeted by its N-terminal leader sequence for import into the apicoplast where it undergoes proteolytic processing, resulting in an N-terminus starting at or near Gly-33 in the mature protein.

The protein localises to the plastid. It is found in the apicoplast. Its function is as follows. Essential for blood-stage parasite viability. Required for apicoplast biogenesis. Associates with the apicoplast genome and mediates apicoplast gene expression. Can bind heme. Can bind protoporphyrin IX. The chain is Divergent heme oxygenase-like protein from Plasmodium falciparum (isolate 3D7).